The sequence spans 466 residues: Asparagine--tRNA ligase (466 aa).

The protein belongs to the class-II aminoacyl-tRNA synthetase family. Homodimer.

Its subcellular location is the cytoplasm. The catalysed reaction is tRNA(Asn) + L-asparagine + ATP = L-asparaginyl-tRNA(Asn) + AMP + diphosphate + H(+). The polypeptide is Asparagine--tRNA ligase (Salmonella choleraesuis (strain SC-B67)).